Here is a 644-residue protein sequence, read N- to C-terminus: 3D-(3,5/4)-trihydroxycyclohexane-1,2-dione hydrolase (644 aa).

Glu-65 contributes to the thiamine diphosphate binding site. The thiamine pyrophosphate binding stretch occupies residues 442–522; that stretch reads SLPGDLQRMW…INVLLFDNSG (81 aa). Residues Asp-493 and Asn-520 each contribute to the Mg(2+) site.

Belongs to the TPP enzyme family. Mg(2+) is required as a cofactor. Requires thiamine diphosphate as cofactor.

The catalysed reaction is 3D-3,5/4-trihydroxycyclohexane-1,2-dione + H2O = 5-deoxy-D-glucuronate + H(+). Its pathway is polyol metabolism; myo-inositol degradation into acetyl-CoA; acetyl-CoA from myo-inositol: step 3/7. In terms of biological role, involved in the cleavage of the C1-C2 bond of 3D-(3,5/4)-trihydroxycyclohexane-1,2-dione (THcHDO) to yield 5-deoxy-glucuronate (5DG). This Bacillus cereus (strain AH820) protein is 3D-(3,5/4)-trihydroxycyclohexane-1,2-dione hydrolase.